The following is a 644-amino-acid chain: Exoribonuclease 2 (644 aa).

Residues 189–516 form the RNB domain; that stretch reads RQDLTALNFV…NHRLLKAAIK (328 aa). Positions 561-643 constitute an S1 motif domain; that stretch reads DTRFAAEIID…ETRSIIARPV (83 aa).

It belongs to the RNR ribonuclease family. RNase II subfamily.

It localises to the cytoplasm. The catalysed reaction is Exonucleolytic cleavage in the 3'- to 5'-direction to yield nucleoside 5'-phosphates.. In terms of biological role, involved in mRNA degradation. Hydrolyzes single-stranded polyribonucleotides processively in the 3' to 5' direction. The chain is Exoribonuclease 2 from Escherichia fergusonii (strain ATCC 35469 / DSM 13698 / CCUG 18766 / IAM 14443 / JCM 21226 / LMG 7866 / NBRC 102419 / NCTC 12128 / CDC 0568-73).